Here is a 169-residue protein sequence, read N- to C-terminus: MDPLKICENYLTFRSIIKGSTFSPGVFRRWRFHALADVVGNIVEREEGRFWEIVPETHTLWALFRGGFTVAPFTEILTSLQLENRGRQLAFLAFLSFLLRNWPSDSVVSEDARLDLVCAPAWSRIQIWSQAARLINDLPESVFEGQGSVVEEECGEEHLARDSDDPLFD.

It belongs to the adenoviridae E1B 19 kDa protein family.

The chain is E1B protein, small T-antigen from Canine adenovirus serotype 1 (strain CLL) (CAdV-1).